The following is a 141-amino-acid chain: Nucleoside diphosphate kinase (141 aa).

ATP is bound by residues K11, F59, R87, T93, R104, and N114. Residue H117 is the Pros-phosphohistidine intermediate of the active site.

It belongs to the NDK family. As to quaternary structure, homotetramer. Mg(2+) serves as cofactor.

It localises to the cytoplasm. It catalyses the reaction a 2'-deoxyribonucleoside 5'-diphosphate + ATP = a 2'-deoxyribonucleoside 5'-triphosphate + ADP. It carries out the reaction a ribonucleoside 5'-diphosphate + ATP = a ribonucleoside 5'-triphosphate + ADP. Its function is as follows. Major role in the synthesis of nucleoside triphosphates other than ATP. The ATP gamma phosphate is transferred to the NDP beta phosphate via a ping-pong mechanism, using a phosphorylated active-site intermediate. The polypeptide is Nucleoside diphosphate kinase (Pseudomonas putida (strain GB-1)).